Reading from the N-terminus, the 444-residue chain is Glutamyl-tRNA reductase (444 aa).

Substrate-binding positions include 49–52 (TCNR), Ser-109, 114–116 (ETQ), and Gln-120. Cys-50 acts as the Nucleophile in catalysis. 189-194 (GAGKMG) is a binding site for NADP(+).

This sequence belongs to the glutamyl-tRNA reductase family. In terms of assembly, homodimer.

The catalysed reaction is (S)-4-amino-5-oxopentanoate + tRNA(Glu) + NADP(+) = L-glutamyl-tRNA(Glu) + NADPH + H(+). Its pathway is porphyrin-containing compound metabolism; protoporphyrin-IX biosynthesis; 5-aminolevulinate from L-glutamyl-tRNA(Glu): step 1/2. Its function is as follows. Catalyzes the NADPH-dependent reduction of glutamyl-tRNA(Glu) to glutamate 1-semialdehyde (GSA). This Bacillus cereus (strain G9842) protein is Glutamyl-tRNA reductase.